A 464-amino-acid polypeptide reads, in one-letter code: Kynureninase (464 aa).

Methionine 1 is modified (N-acetylmethionine). Pyridoxal 5'-phosphate contacts are provided by residues leucine 137, threonine 138, 165–168, serine 221, aspartate 250, histidine 253, and tyrosine 275; that span reads FPSD. N6-(pyridoxal phosphate)lysine is present on lysine 276. 2 residues coordinate pyridoxal 5'-phosphate: tryptophan 305 and asparagine 333.

Belongs to the kynureninase family. Homodimer. Pyridoxal 5'-phosphate serves as cofactor.

The protein resides in the cytoplasm. It localises to the cytosol. It catalyses the reaction L-kynurenine + H2O = anthranilate + L-alanine + H(+). The catalysed reaction is 3-hydroxy-L-kynurenine + H2O = 3-hydroxyanthranilate + L-alanine + H(+). Its pathway is amino-acid degradation; L-kynurenine degradation; L-alanine and anthranilate from L-kynurenine: step 1/1. The protein operates within cofactor biosynthesis; NAD(+) biosynthesis; quinolinate from L-kynurenine: step 2/3. Its function is as follows. Catalyzes the cleavage of L-kynurenine (L-Kyn) and L-3-hydroxykynurenine (L-3OHKyn) into anthranilic acid (AA) and 3-hydroxyanthranilic acid (3-OHAA), respectively. Has a preference for the L-3-hydroxy form. Also has cysteine-conjugate-beta-lyase activity. The polypeptide is Kynureninase (Kynu) (Mus musculus (Mouse)).